Consider the following 673-residue polypeptide: Annexin A6 (673 aa).

At Ala2 the chain carries N-acetylalanine. Ser13 is modified (phosphoserine). Annexin repeat units follow at residues 20-91, 92-163, 175-247, 251-322, 363-434, 435-506, 521-595, and 599-670; these read FNPS…GLMR, PPAY…VLLQ, DLVQ…AVVK, STAE…KLCG, FNPD…GLMM, PPAH…SLAT, EDAQ…AIVQ, and NKPL…AICG. Position 30 is a phosphotyrosine (Tyr30). Lys63, Lys68, Lys75, and Lys81 each carry N6-acetyllysine. Tyr201 bears the Phosphotyrosine mark. Lys306, Lys370, and Lys418 each carry N6-acetyllysine. A Phosphoserine modification is found at Ser422. An N6-acetyllysine modification is found at Lys483. Residue Ser537 is modified to Phosphoserine. The residue at position 620 (Lys620) is an N6-acetyllysine.

Belongs to the annexin family. In terms of processing, phosphorylated in response to growth factor stimulation.

The protein localises to the cytoplasm. It is found in the melanosome. In terms of biological role, may associate with CD21. May regulate the release of Ca(2+) from intracellular stores. The polypeptide is Annexin A6 (ANXA6) (Bos taurus (Bovine)).